Consider the following 250-residue polypeptide: Vacuolar protein sorting-associated protein 22 homolog 1 (250 aa).

The stretch at 35-55 (MKEQLSTFRSQLEEFARKHKN) forms a coiled coil.

The protein belongs to the SNF8 family. Component of the endosomal sorting complex required for transport II (ESCRT-II), composed of VPS22, VPS25 and VPS36.

The protein localises to the endosome. Component of the endosomal sorting complex required for transport II (ESCRT-II), which is required for multivesicular body (MVB) formation and sorting of endosomal cargo proteins into MVBs. The ESCRT-II complex is probably involved in the recruitment of the ESCRT-III complex. This Arabidopsis thaliana (Mouse-ear cress) protein is Vacuolar protein sorting-associated protein 22 homolog 1 (VP22-1).